The chain runs to 481 residues: Cis-aconitate decarboxylase (481 aa).

The interval 462–481 is disordered; it reads SPPEVASNSPACNNSITNLS. Residues 467–481 show a composition bias toward polar residues; sequence ASNSPACNNSITNLS.

The protein belongs to the PrpD family. Homodimer. In terms of tissue distribution, expressed in LPS-tolerized macrophages (at protein level). Expressed in peripheral blood mononuclear cells (PBMCs), microglia and macrophage cells.

The protein resides in the mitochondrion. The catalysed reaction is cis-aconitate + H(+) = itaconate + CO2. Functionally, cis-aconitate decarboxylase that catalyzes production of itaconate and is involved in the inhibition of the inflammatory response. Acts as a negative regulator of the Toll-like receptors (TLRs)-mediated inflammatory innate response by stimulating the tumor necrosis factor alpha-induced protein TNFAIP3 expression via reactive oxygen species (ROS) in LPS-tolerized macrophages. Involved in antimicrobial response of innate immune cells; ACOD1-mediated itaconic acid production contributes to the antimicrobial activity of macrophages by generating itaconate, leading to alkylation of proteins, such as TFEB. Involved in antiviral response following infection by flavivirus in neurons: ACOD1-mediated itaconate production inhibits the activity of succinate dehydrogenase, generating a metabolic state in neurons that suppresses replication of viral genomes. Plays a role in the embryo implantation. The polypeptide is Cis-aconitate decarboxylase (Homo sapiens (Human)).